Reading from the N-terminus, the 480-residue chain is Membrane-bound lytic murein transglycosylase F (480 aa).

An N-terminal signal peptide occupies residues 1–15; it reads MNRILLTLLTLTLLA. The segment at 16–259 is non-LT domain; that stretch reads GCQRVAVEET…HLDEKYFAHV (244 aa). Residues 260–480 form an LT domain region; the sequence is KRFDYVDTRA…EKAITGAQPE (221 aa). Residue Glu-304 is part of the active site.

It in the N-terminal section; belongs to the bacterial solute-binding protein 3 family. In the C-terminal section; belongs to the transglycosylase Slt family.

The protein localises to the cell outer membrane. It carries out the reaction Exolytic cleavage of the (1-&gt;4)-beta-glycosidic linkage between N-acetylmuramic acid (MurNAc) and N-acetylglucosamine (GlcNAc) residues in peptidoglycan, from either the reducing or the non-reducing ends of the peptidoglycan chains, with concomitant formation of a 1,6-anhydrobond in the MurNAc residue.. Murein-degrading enzyme that degrades murein glycan strands and insoluble, high-molecular weight murein sacculi, with the concomitant formation of a 1,6-anhydromuramoyl product. Lytic transglycosylases (LTs) play an integral role in the metabolism of the peptidoglycan (PG) sacculus. Their lytic action creates space within the PG sacculus to allow for its expansion as well as for the insertion of various structures such as secretion systems and flagella. The chain is Membrane-bound lytic murein transglycosylase F from Shewanella woodyi (strain ATCC 51908 / MS32).